A 458-amino-acid polypeptide reads, in one-letter code: Bifunctional protein GlmU (458 aa).

A pyrophosphorylase region spans residues Met-1 to Arg-232. UDP-N-acetyl-alpha-D-glucosamine is bound by residues Leu-10–Gly-13, Lys-24, Gln-79, Gly-84–Thr-85, Tyr-106–Asp-108, Gly-142, Glu-157, Asn-172, and Asn-230. Residue Asp-108 coordinates Mg(2+). A Mg(2+)-binding site is contributed by Asn-230. A linker region spans residues Gln-233–Ala-253. The N-acetyltransferase stretch occupies residues Gly-254–Lys-458. Positions 336 and 354 each coordinate UDP-N-acetyl-alpha-D-glucosamine. His-366 functions as the Proton acceptor in the catalytic mechanism. Tyr-369 and Asn-380 together coordinate UDP-N-acetyl-alpha-D-glucosamine. Residues Ala-383, Asn-389–Tyr-390, Ser-408, Ala-426, and Arg-443 each bind acetyl-CoA.

In the N-terminal section; belongs to the N-acetylglucosamine-1-phosphate uridyltransferase family. It in the C-terminal section; belongs to the transferase hexapeptide repeat family. In terms of assembly, homotrimer. It depends on Mg(2+) as a cofactor.

It is found in the cytoplasm. The catalysed reaction is alpha-D-glucosamine 1-phosphate + acetyl-CoA = N-acetyl-alpha-D-glucosamine 1-phosphate + CoA + H(+). It catalyses the reaction N-acetyl-alpha-D-glucosamine 1-phosphate + UTP + H(+) = UDP-N-acetyl-alpha-D-glucosamine + diphosphate. It functions in the pathway nucleotide-sugar biosynthesis; UDP-N-acetyl-alpha-D-glucosamine biosynthesis; N-acetyl-alpha-D-glucosamine 1-phosphate from alpha-D-glucosamine 6-phosphate (route II): step 2/2. Its pathway is nucleotide-sugar biosynthesis; UDP-N-acetyl-alpha-D-glucosamine biosynthesis; UDP-N-acetyl-alpha-D-glucosamine from N-acetyl-alpha-D-glucosamine 1-phosphate: step 1/1. The protein operates within bacterial outer membrane biogenesis; LPS lipid A biosynthesis. Catalyzes the last two sequential reactions in the de novo biosynthetic pathway for UDP-N-acetylglucosamine (UDP-GlcNAc). The C-terminal domain catalyzes the transfer of acetyl group from acetyl coenzyme A to glucosamine-1-phosphate (GlcN-1-P) to produce N-acetylglucosamine-1-phosphate (GlcNAc-1-P), which is converted into UDP-GlcNAc by the transfer of uridine 5-monophosphate (from uridine 5-triphosphate), a reaction catalyzed by the N-terminal domain. The protein is Bifunctional protein GlmU of Psychrobacter cryohalolentis (strain ATCC BAA-1226 / DSM 17306 / VKM B-2378 / K5).